The chain runs to 273 residues: Dermonecrotic toxin LhSicTox-alphaIA2aviii (273 aa).

Histidine 5 is a catalytic residue. 2 residues coordinate Mg(2+): glutamate 25 and aspartate 27. Histidine 41 functions as the Nucleophile in the catalytic mechanism. 2 cysteine pairs are disulfide-bonded: cysteine 45–cysteine 51 and cysteine 47–cysteine 190. Residue aspartate 85 coordinates Mg(2+).

This sequence belongs to the arthropod phospholipase D family. Class II subfamily. Mg(2+) serves as cofactor. Expressed by the venom gland.

The protein resides in the secreted. The catalysed reaction is an N-(acyl)-sphingosylphosphocholine = an N-(acyl)-sphingosyl-1,3-cyclic phosphate + choline. It carries out the reaction an N-(acyl)-sphingosylphosphoethanolamine = an N-(acyl)-sphingosyl-1,3-cyclic phosphate + ethanolamine. The enzyme catalyses a 1-acyl-sn-glycero-3-phosphocholine = a 1-acyl-sn-glycero-2,3-cyclic phosphate + choline. It catalyses the reaction a 1-acyl-sn-glycero-3-phosphoethanolamine = a 1-acyl-sn-glycero-2,3-cyclic phosphate + ethanolamine. In terms of biological role, dermonecrotic toxins cleave the phosphodiester linkage between the phosphate and headgroup of certain phospholipids (sphingolipid and lysolipid substrates), forming an alcohol (often choline) and a cyclic phosphate. This toxin acts on sphingomyelin (SM). It may also act on ceramide phosphoethanolamine (CPE), lysophosphatidylcholine (LPC) and lysophosphatidylethanolamine (LPE), but not on lysophosphatidylserine (LPS), and lysophosphatidylglycerol (LPG). It acts by transphosphatidylation, releasing exclusively cyclic phosphate products as second products. Induces dermonecrosis, hemolysis, increased vascular permeability, edema, inflammatory response, and platelet aggregation. The chain is Dermonecrotic toxin LhSicTox-alphaIA2aviii from Loxosceles hirsuta (Recluse spider).